The sequence spans 187 residues: 2-oxoglutarate synthase subunit KorC (187 aa).

As to quaternary structure, heterotetramer of the KorA, KorB, KorC and KorD subunits.

The catalysed reaction is 2 oxidized [2Fe-2S]-[ferredoxin] + 2-oxoglutarate + CoA = succinyl-CoA + 2 reduced [2Fe-2S]-[ferredoxin] + CO2 + H(+). In Methanocaldococcus jannaschii (strain ATCC 43067 / DSM 2661 / JAL-1 / JCM 10045 / NBRC 100440) (Methanococcus jannaschii), this protein is 2-oxoglutarate synthase subunit KorC (korC).